The chain runs to 379 residues: Mannitol-1-phosphate 5-dehydrogenase (379 aa).

Ala-3–Gly-14 contributes to the NAD(+) binding site.

The protein belongs to the mannitol dehydrogenase family.

It catalyses the reaction D-mannitol 1-phosphate + NAD(+) = beta-D-fructose 6-phosphate + NADH + H(+). In Bacillus licheniformis (strain ATCC 14580 / DSM 13 / JCM 2505 / CCUG 7422 / NBRC 12200 / NCIMB 9375 / NCTC 10341 / NRRL NRS-1264 / Gibson 46), this protein is Mannitol-1-phosphate 5-dehydrogenase.